A 149-amino-acid chain; its full sequence is Large ribosomal subunit protein bL9 (149 aa).

This sequence belongs to the bacterial ribosomal protein bL9 family.

Binds to the 23S rRNA. This is Large ribosomal subunit protein bL9 from Sulfurihydrogenibium sp. (strain YO3AOP1).